A 218-amino-acid chain; its full sequence is Guanylate kinase (218 aa).

One can recognise a Guanylate kinase-like domain in the interval 14–193; that stretch reads GLMLVLSSPS…AFAEVRGIVV (180 aa). 21 to 28 is a binding site for ATP; sequence SPSGAGKS.

This sequence belongs to the guanylate kinase family.

It localises to the cytoplasm. The enzyme catalyses GMP + ATP = GDP + ADP. Functionally, essential for recycling GMP and indirectly, cGMP. The polypeptide is Guanylate kinase (gmk) (Mesorhizobium japonicum (strain LMG 29417 / CECT 9101 / MAFF 303099) (Mesorhizobium loti (strain MAFF 303099))).